The following is a 188-amino-acid chain: Elongation factor P (188 aa).

An N6-(3,6-diaminohexanoyl)-5-hydroxylysine modification is found at K34.

Belongs to the elongation factor P family. May be beta-lysylated on the epsilon-amino group of Lys-34 by the combined action of EpmA and EpmB, and then hydroxylated on the C5 position of the same residue by EpmC (if this protein is present). Lysylation is critical for the stimulatory effect of EF-P on peptide-bond formation. The lysylation moiety may extend toward the peptidyltransferase center and stabilize the terminal 3-CCA end of the tRNA. Hydroxylation of the C5 position on Lys-34 may allow additional potential stabilizing hydrogen-bond interactions with the P-tRNA.

The protein resides in the cytoplasm. It participates in protein biosynthesis; polypeptide chain elongation. In terms of biological role, involved in peptide bond synthesis. Alleviates ribosome stalling that occurs when 3 or more consecutive Pro residues or the sequence PPG is present in a protein, possibly by augmenting the peptidyl transferase activity of the ribosome. Modification of Lys-34 is required for alleviation. This is Elongation factor P from Photorhabdus laumondii subsp. laumondii (strain DSM 15139 / CIP 105565 / TT01) (Photorhabdus luminescens subsp. laumondii).